The sequence spans 1166 residues: Reverse gyrase 2 (1166 aa).

The RG N-terminal-type zinc finger occupies 1–40 (MINVMYKNSCPNCGGDISGDRLLNGLPCEACLPYINGIDD). Residues Cys10, Cys13, Cys28, and Cys31 each coordinate Zn(2+). ATP-binding positions include Gln92 and 109 to 116 (APTGLGKT). The Helicase ATP-binding domain occupies 96–285 (LRRLASNQSF…ALRLLTGFEP (190 aa)). Residues 190 to 193 (DDAD) carry the DEAD box motif. Residues 576–1166 (FNISTGLLIV…VNPLKSEQNV (591 aa)) are topoisomerase I. One can recognise a Toprim domain in the interval 580 to 743 (TGLLIVESPT…NVYRVVYHEI (164 aa)). Position 586 (Glu586) interacts with Mg(2+). The RG C-terminal-type zinc finger occupies 662 to 689 (IKKCLDCNKIFSSASDKCPYCGSANLQS). Residues Cys665, Cys668, Cys679, and Cys682 each coordinate Zn(2+). Asp712 contacts Mg(2+). One can recognise a Topo IA-type catalytic domain in the interval 759–1157 (NTNLVMSQIV…EIFSEISTLV (399 aa)). Tyr903 (O-(5'-phospho-DNA)-tyrosine intermediate) is an active-site residue.

This sequence in the N-terminal section; belongs to the DEAD box helicase family. DDVD subfamily. In the C-terminal section; belongs to the type IA topoisomerase family. Monomer. The cofactor is Zn(2+). Requires Mg(2+) as cofactor.

The protein localises to the cytoplasm. It catalyses the reaction ATP + H2O = ADP + phosphate + H(+). With respect to regulation, at least one of the 2 proteins is inhibited by actinomycin D. Less sensitive to NaCl than TopR1, maximal positive supercoiling is observed with 100 mM NaCl; as NaCl rises higher than 400 mM supercoiling decreases. At 600 mM NaCl relaxes but does not introduce positive supercoils into negatively supercoiled substrate. Functionally, modifies the topological state of DNA by introducing positive supercoils in an ATP-dependent process. A highly processive enzyme, it introduces a large number of positive supercoils directly in a negatively supercoiled substrate. At 75 degrees Celsius introduces more than 23 positive supercoils into pTZ18R DNA (probably 2860 bp), more than TopR1; unlike TopR1 little to no relaxation of the negatively supercoiled substrate is seen in the presence of ATP, in the absence of ATP no activity is seen. At 45 degrees Celsius the enzyme is slower and in vitro individual steps can be detected. It cleaves transiently a single DNA strand and remains covalently bound to the 5' DNA end through a tyrosine residue. May be involved in DNA damage response. May be involved in rewinding the DNA strands in the regions of the chromosome that have opened up to allow transcription or replication. Its function is as follows. There are 2 genes for this protein in the cell. During exponential growth this is the more highly expressed isoform (about 125 molecules per cell at 80 degrees Celsius, about 117 molecules at 88 degrees Celsius); this isoform is less active at higher temperature. Grows actively at both 80 and 88 degrees Celsius; survives a long exposure at 45 degrees Celsius without DNA replication or cell division occurring. Experiments using whole cell extracts do not distinguish which isoform is present, the results are probably a mixture of the two forms. This is Reverse gyrase 2 from Saccharolobus solfataricus (strain ATCC 35092 / DSM 1617 / JCM 11322 / P2) (Sulfolobus solfataricus).